The following is a 626-amino-acid chain: Phosphomethylpyrimidine synthase (626 aa).

The tract at residues 1–27 (MSKQEKAISLSESAQVDQQSVQPLPNS) is disordered. A compositionally biased stretch (polar residues) spans 10-25 (LSESAQVDQQSVQPLP). Substrate-binding positions include Asn232, Met261, Tyr290, His326, 346-348 (SRG), 387-390 (DGLR), and Glu426. Position 430 (His430) interacts with Zn(2+). Tyr453 provides a ligand contact to substrate. His494 contacts Zn(2+). Cys574, Cys577, and Cys582 together coordinate [4Fe-4S] cluster.

The protein belongs to the ThiC family. In terms of assembly, homodimer. Requires [4Fe-4S] cluster as cofactor.

It catalyses the reaction 5-amino-1-(5-phospho-beta-D-ribosyl)imidazole + S-adenosyl-L-methionine = 4-amino-2-methyl-5-(phosphooxymethyl)pyrimidine + CO + 5'-deoxyadenosine + formate + L-methionine + 3 H(+). It participates in cofactor biosynthesis; thiamine diphosphate biosynthesis. Functionally, catalyzes the synthesis of the hydroxymethylpyrimidine phosphate (HMP-P) moiety of thiamine from aminoimidazole ribotide (AIR) in a radical S-adenosyl-L-methionine (SAM)-dependent reaction. The polypeptide is Phosphomethylpyrimidine synthase (Pseudomonas entomophila (strain L48)).